We begin with the raw amino-acid sequence, 375 residues long: Peritrophin-48 (375 aa).

The signal sequence occupies residues 1–20 (MIIKTLLASVAIMLIATVNA). 5 Chitin-binding type-2 domains span residues 25–83 (AKYC…NCIL), 86–143 (DNPC…SDDD), 153–210 (LNIC…MCER), 224–292 (ETLC…GCNR), and 294–360 (EYTT…ACQN). A disulfide bridge connects residues Cys60 and Cys73. Residue Asn117 is glycosylated (N-linked (GlcNAc...) asparagine). 4 disulfide bridges follow: Cys120/Cys133, Cys187/Cys200, Cys265/Cys278, and Cys330/Cys343. Residue Asn360 is glycosylated (N-linked (GlcNAc...) asparagine).

In terms of processing, glycosylated. As to expression, cardia and midgut peritrophic membrane.

May bind chitin or related oligosaccharide structures. The protein is Peritrophin-48 of Lucilia cuprina (Green bottle fly).